Consider the following 467-residue polypeptide: Ankyrin repeat and SOCS box protein 10 (467 aa).

7 ANK repeats span residues 115–144 (ELTT…RPDS), 147–176 (GGRT…DPNI), 180–209 (DGKR…RVDG), 214–243 (EEET…CPDA), 247–289 (EGWT…DADA), 293–322 (DKQR…SANT), and 326–361 (GGHT…AVRV). Residues 412–464 (YSSLFALVRQPRSLQHLSRCALRSHLEGSLPQALPRLPLPPRLLRYLQLDFEG) form the SOCS box domain.

It belongs to the ankyrin SOCS box (ASB) family. In terms of tissue distribution, expressed in the eye. The highest expression is observed in the iris, with moderate levels in the trabecular meshwork (TM), the lamina, and the optic nerve; slightly lower levels in the ciliary body, retina, and choroid; and very low levels in the lens.

Its subcellular location is the cytoplasm. It is found in the nucleus. It functions in the pathway protein modification; protein ubiquitination. In terms of biological role, may be a substrate-recognition component of a SCF-like ECS (Elongin-Cullin-SOCS-box protein) E3 ubiquitin-protein ligase complex which mediates the ubiquitination and subsequent proteasomal degradation of target proteins. In Homo sapiens (Human), this protein is Ankyrin repeat and SOCS box protein 10 (ASB10).